Reading from the N-terminus, the 374-residue chain is Putative 12-oxophytodienoate reductase 5 (374 aa).

FMN-binding positions include 30 to 32 (PMT), alanine 63, and glutamine 105. 177–180 (HGAN) contacts substrate. Tyrosine 182 acts as the Proton donor in catalysis. Residue arginine 229 participates in FMN binding. Arginine 270 is a binding site for substrate. FMN-binding positions include glycine 300 and 321–322 (GR).

It belongs to the NADH:flavin oxidoreductase/NADH oxidase family. FMN is required as a cofactor.

In terms of biological role, putative oxophytodienoate reductase that may be involved in the biosynthesis or metabolism of oxylipin signaling molecules. The chain is Putative 12-oxophytodienoate reductase 5 (OPR5) from Oryza sativa subsp. japonica (Rice).